Consider the following 216-residue polypeptide: Large ribosomal subunit protein uL3 (216 aa).

N5-methylglutamine is present on Gln-157.

The protein belongs to the universal ribosomal protein uL3 family. As to quaternary structure, part of the 50S ribosomal subunit. Forms a cluster with proteins L14 and L19. Post-translationally, methylated by PrmB.

In terms of biological role, one of the primary rRNA binding proteins, it binds directly near the 3'-end of the 23S rRNA, where it nucleates assembly of the 50S subunit. The polypeptide is Large ribosomal subunit protein uL3 (Xanthomonas oryzae pv. oryzae (strain MAFF 311018)).